The chain runs to 77 residues: Envelope protein US9 homolog (77 aa).

The Di-leucine internalization motif signature appears at 12 to 13; that stretch reads LL.

It belongs to the alphaherpesvirinae envelope protein US9 family.

The protein is Envelope protein US9 homolog of Chlorocebus aethiops (Green monkey).